Consider the following 256-residue polypeptide: Thiazole synthase (256 aa).

Lys102 serves as the catalytic Schiff-base intermediate with DXP. Residues Gly163, 189 to 190 (AG), and 211 to 212 (AT) contribute to the 1-deoxy-D-xylulose 5-phosphate site.

The protein belongs to the ThiG family. Homotetramer. Forms heterodimers with either ThiH or ThiS.

Its subcellular location is the cytoplasm. It catalyses the reaction [ThiS sulfur-carrier protein]-C-terminal-Gly-aminoethanethioate + 2-iminoacetate + 1-deoxy-D-xylulose 5-phosphate = [ThiS sulfur-carrier protein]-C-terminal Gly-Gly + 2-[(2R,5Z)-2-carboxy-4-methylthiazol-5(2H)-ylidene]ethyl phosphate + 2 H2O + H(+). It functions in the pathway cofactor biosynthesis; thiamine diphosphate biosynthesis. Its function is as follows. Catalyzes the rearrangement of 1-deoxy-D-xylulose 5-phosphate (DXP) to produce the thiazole phosphate moiety of thiamine. Sulfur is provided by the thiocarboxylate moiety of the carrier protein ThiS. In vitro, sulfur can be provided by H(2)S. This Nocardia farcinica (strain IFM 10152) protein is Thiazole synthase.